We begin with the raw amino-acid sequence, 224 residues long: UPF0173 metal-dependent hydrolase Ta0764 (224 aa).

It belongs to the UPF0173 family.

In Thermoplasma acidophilum (strain ATCC 25905 / DSM 1728 / JCM 9062 / NBRC 15155 / AMRC-C165), this protein is UPF0173 metal-dependent hydrolase Ta0764.